A 152-amino-acid chain; its full sequence is Deoxyuridine 5'-triphosphate nucleotidohydrolase (152 aa).

Substrate-binding positions include 63–65, N76, and 80–82; these read RSG and TID. A disordered region spans residues 129–152; it reads LDDTERGQGGYGSTGVSAMPPVDG.

The protein belongs to the dUTPase family. Mg(2+) serves as cofactor.

It catalyses the reaction dUTP + H2O = dUMP + diphosphate + H(+). It functions in the pathway pyrimidine metabolism; dUMP biosynthesis; dUMP from dCTP (dUTP route): step 2/2. In terms of biological role, this enzyme is involved in nucleotide metabolism: it produces dUMP, the immediate precursor of thymidine nucleotides and it decreases the intracellular concentration of dUTP so that uracil cannot be incorporated into DNA. This chain is Deoxyuridine 5'-triphosphate nucleotidohydrolase, found in Cutibacterium acnes (strain DSM 16379 / KPA171202) (Propionibacterium acnes).